The primary structure comprises 522 residues: Sugar transport protein 1 (522 aa).

Residues 1–22 (MPAGGFVVGDGQKAYPGKLTPF) lie on the Cytoplasmic side of the membrane. A helical membrane pass occupies residues 23–43 (VLFTCVVAAMGGLIFGYDIGI). The Extracellular segment spans residues 44–79 (SGGVTSMPSFLKRFFPSVYRKQQEDASTNQYCQYDS). The helical transmembrane segment at 80–100 (PTLTMFTSSLYLAALISSLVA) threads the bilayer. The Cytoplasmic portion of the chain corresponds to 101–117 (STVTRKFGRRLSMLFGG). Residues 118–138 (ILFCAGALINGFAKHVWMLIV) form a helical membrane-spanning segment. At 139-140 (GR) the chain is on the extracellular side. A helical transmembrane segment spans residues 141–161 (ILLGFGIGFANQAVPLYLSEM). The Cytoplasmic portion of the chain corresponds to 162–171 (APYKYRGALN). Residues 172–192 (IGFQLSITIGILVAEVLNYFF) form a helical membrane-spanning segment. At 193-202 (AKIKGGWGWR) the chain is on the extracellular side. Residues 203 to 223 (LSLGGAVVPALIITIGSLVLP) traverse the membrane as a helical segment. Over 224–289 (DTPNSMIERG…YRPHLTMAVM (66 aa)) the chain is Cytoplasmic. The residue at position 252 (serine 252) is a Phosphoserine. A helical transmembrane segment spans residues 290–310 (IPFFQQLTGINVIMFYAPVLF). The Extracellular portion of the chain corresponds to 311 to 321 (NTIGFTTDASL). Residues 322–342 (MSAVVTGSVNVAATLVSIYGV) form a helical membrane-spanning segment. Over 343-348 (DRWGRR) the chain is Cytoplasmic. The chain crosses the membrane as a helical span at residues 349–369 (FLFLEGGTQMLICQAVVAACI). At 370-384 (GAKFGVDGTPGELPK) the chain is on the extracellular side. A helical transmembrane segment spans residues 385–405 (WYAIVVVTFICIYVAGFAWSW). Residues 406–427 (GPLGWLVPSEIFPLEIRSAAQS) lie on the Cytoplasmic side of the membrane. Residues 428-448 (ITVSVNMIFTFIIAQIFLTML) form a helical membrane-spanning segment. The Extracellular segment spans residues 449–452 (CHLK). The helical transmembrane segment at 453 to 473 (FGLFLVFAFFVVVMSIFVYIF) threads the bilayer. Topologically, residues 474–522 (LPETKGIPIEEMGQVWRSHWYWSRFVEDGEYGNALEMGKNSNQAGTKHV) are cytoplasmic.

Belongs to the major facilitator superfamily. Sugar transporter (TC 2.A.1.1) family. Mostly expressed in young leaves, especially in guard cells (at protein level). Also present in roots.

The protein localises to the cell membrane. Its function is as follows. Major hexose transporter. Mediates an active uptake of hexoses, by sugar/hydrogen symport. Can transport glucose, 3-O-methylglucose, fructose, xylose, mannose, galactose, fucose, 2-deoxyglucose and arabinose. Confers sensitivity to galactose in seedlings. The polypeptide is Sugar transport protein 1 (STP1) (Arabidopsis thaliana (Mouse-ear cress)).